The following is a 167-amino-acid chain: Large ribosomal subunit protein uL10 (167 aa).

The protein belongs to the universal ribosomal protein uL10 family. As to quaternary structure, part of the ribosomal stalk of the 50S ribosomal subunit. The N-terminus interacts with L11 and the large rRNA to form the base of the stalk. The C-terminus forms an elongated spine to which L12 dimers bind in a sequential fashion forming a multimeric L10(L12)X complex.

Its function is as follows. Forms part of the ribosomal stalk, playing a central role in the interaction of the ribosome with GTP-bound translation factors. This is Large ribosomal subunit protein uL10 from Mycoplasma mobile (strain ATCC 43663 / 163K / NCTC 11711) (Mesomycoplasma mobile).